Consider the following 452-residue polypeptide: Probable 1,4-beta-D-glucan cellobiohydrolase A (452 aa).

The signal sequence occupies residues Met1 to Ala17. Asn81 carries an N-linked (GlcNAc...) asparagine glycan. Glu226 functions as the Nucleophile in the catalytic mechanism. Glu231 acts as the Proton donor in catalysis. An N-linked (GlcNAc...) asparagine glycan is attached at Asn284. The segment at Ala405–His431 is disordered.

It belongs to the glycosyl hydrolase 7 (cellulase C) family.

It localises to the secreted. The catalysed reaction is Hydrolysis of (1-&gt;4)-beta-D-glucosidic linkages in cellulose and cellotetraose, releasing cellobiose from the non-reducing ends of the chains.. Functionally, the biological conversion of cellulose to glucose generally requires three types of hydrolytic enzymes: (1) Endoglucanases which cut internal beta-1,4-glucosidic bonds; (2) Exocellobiohydrolases that cut the disaccharide cellobiose from the non-reducing end of the cellulose polymer chain; (3) Beta-1,4-glucosidases which hydrolyze the cellobiose and other short cello-oligosaccharides to glucose. The protein is Probable 1,4-beta-D-glucan cellobiohydrolase A (cbhA) of Aspergillus fumigatus (strain CBS 144.89 / FGSC A1163 / CEA10) (Neosartorya fumigata).